Reading from the N-terminus, the 62-residue chain is Delta-theraphotoxin-Cg1a 3 (62 aa).

The N-terminal stretch at 1 to 21 is a signal peptide; the sequence is MKTSILFVIFSLALVFALSPA. A propeptide spanning residues 22–29 is cleaved from the precursor; it reads TEIEETDR. Cystine bridges form between Cys-31-Cys-46, Cys-38-Cys-51, and Cys-45-Cys-58.

It belongs to the neurotoxin 10 (Hwtx-1) family. 33 (Jztx-1) subfamily. As to expression, expressed by the venom gland.

It localises to the secreted. In terms of biological role, moderately inhibits voltage-gated sodium channels and weakly inhibits voltage-gated potassium channel. Inhibits the inactivation of rat Nav1.2/SCN2A (IC(50)=870 nM), rat Nav1.3/SCN3A (IC(50)=845 nM), rat Nav1.4/SCN4A (IC(50)=339 nM), human Nav1.5/SCN5A (IC(50)=335 nM) and human Nav1.7/SCN9A sodium channels (IC(50)=348 nM). The toxin delays the inactivation of sodium channels without affecting the activation and steady-state inactivation kinetics in the physiological range of voltages. Site-directed mutagenesis of the sodium channel indicates that the toxin interacts with site 3 located at the extracellular S3-S4 linker of domain IV. On potassium channels, it inhibits activation of channels with an IC(50) of 8.05 uM through a voltage sensor-trapping mechanism. It increases muscle contraction in several assays (mouse phrenic nerve-diaphragm, toad heart, rat vas deferens) and is suggested to act both presynaptically and postsynaptically. The chain is Delta-theraphotoxin-Cg1a 3 from Chilobrachys guangxiensis (Chinese earth tiger tarantula).